Reading from the N-terminus, the 146-residue chain is Anti-sigma F factor (146 aa).

Belongs to the anti-sigma-factor family.

It carries out the reaction L-seryl-[protein] + ATP = O-phospho-L-seryl-[protein] + ADP + H(+). The enzyme catalyses L-threonyl-[protein] + ATP = O-phospho-L-threonyl-[protein] + ADP + H(+). Its function is as follows. Binds to sigma F and blocks its ability to form an RNA polymerase holoenzyme (E-sigma F). Phosphorylates SpoIIAA on a serine residue. This phosphorylation may enable SpoIIAA to act as an anti-anti-sigma factor that counteracts SpoIIAB and thus releases sigma F from inhibition. The chain is Anti-sigma F factor from Lysinibacillus sphaericus (Bacillus sphaericus).